We begin with the raw amino-acid sequence, 262 residues long: Pimeloyl-[acyl-carrier protein] methyl ester esterase (262 aa).

Positions 15 to 242 (HLVLLHGWGL…AAHAPFISHP (228 aa)) constitute an AB hydrolase-1 domain. Residues W22, 82–83 (SL), and 143–147 (FLALQ) each bind substrate. Residue S82 is the Nucleophile of the active site. Catalysis depends on residues D207 and H235. Position 235 (H235) interacts with substrate.

This sequence belongs to the AB hydrolase superfamily. Carboxylesterase BioH family. In terms of assembly, monomer.

The protein localises to the cytoplasm. The catalysed reaction is 6-carboxyhexanoyl-[ACP] methyl ester + H2O = 6-carboxyhexanoyl-[ACP] + methanol + H(+). Its pathway is cofactor biosynthesis; biotin biosynthesis. In terms of biological role, the physiological role of BioH is to remove the methyl group introduced by BioC when the pimeloyl moiety is complete. It allows to synthesize pimeloyl-ACP via the fatty acid synthetic pathway through the hydrolysis of the ester bonds of pimeloyl-ACP esters. The sequence is that of Pimeloyl-[acyl-carrier protein] methyl ester esterase from Shigella flexneri.